Reading from the N-terminus, the 72-residue chain is Large ribosomal subunit protein bL32c (72 aa).

The tract at residues 49–72 (PPAPVSENWDDEAKGFGKDLDAAE) is disordered. The segment covering 59–72 (DEAKGFGKDLDAAE) has biased composition (basic and acidic residues).

Belongs to the bacterial ribosomal protein bL32 family.

It is found in the plastid. It localises to the chloroplast. The chain is Large ribosomal subunit protein bL32c from Ostreococcus tauri.